The following is a 510-amino-acid chain: Ferredoxin--nitrite reductase (510 aa).

[4Fe-4S] cluster is bound by residues C396, C402, C437, and C441. Residue C441 participates in siroheme binding.

It belongs to the nitrite and sulfite reductase 4Fe-4S domain family.

The catalysed reaction is 6 oxidized [2Fe-2S]-[ferredoxin] + NH4(+) + 2 H2O = nitrite + 6 reduced [2Fe-2S]-[ferredoxin] + 8 H(+). This chain is Ferredoxin--nitrite reductase (nirA), found in Leptolyngbya laminosa (Phormidium laminosum).